We begin with the raw amino-acid sequence, 209 residues long: MELILKYFPNLSEQQKTQFAALYDLYTDWNSKINVISRKDITNLYEHHVLHSLGIAKVINFTPDTQIMDLGTGGGFPGIPLAILFPEVQFHLVDSIGKKVKVATEIANAIGLKNVTFRHCRAEEEKRKFDFVVSRAVMPLGDLIKIIRKNIRQEQHNALPNGLICLKGGELEQETMPVKHKTMLYDLKNEFTEDFFKTKKVVYVTISGL.

S-adenosyl-L-methionine-binding positions include Gly71, Phe76, 122–123 (AE), and Arg135.

It belongs to the methyltransferase superfamily. RNA methyltransferase RsmG family.

The protein localises to the cytoplasm. Functionally, specifically methylates the N7 position of a guanine in 16S rRNA. This is Ribosomal RNA small subunit methyltransferase G from Phocaeicola vulgatus (strain ATCC 8482 / DSM 1447 / JCM 5826 / CCUG 4940 / NBRC 14291 / NCTC 11154) (Bacteroides vulgatus).